Reading from the N-terminus, the 675-residue chain is Heat shock 70 kDa protein, mitochondrial (675 aa).

The transit peptide at 1–52 directs the protein to the mitochondrion; that stretch reads MAATLLRSLQRRNLSSSSVSAFRSLTGSTKTSYATHKLASLTRPFSSRPAGN. Positions 639–675 are disordered; that stretch reads VSKIGQHMSGGSSGGPSEGGSQGGEQAPEAEYEEVKK. The span at 649-661 shows a compositional bias: gly residues; the sequence is GSSGGPSEGGSQG. Residues 666-675 are compositionally biased toward acidic residues; sequence PEAEYEEVKK.

Belongs to the heat shock protein 70 family.

Its subcellular location is the mitochondrion. The polypeptide is Heat shock 70 kDa protein, mitochondrial (HSP1) (Pisum sativum (Garden pea)).